The following is a 339-amino-acid chain: MRPLLEKIARGLELSLEEAYNAALAILKMEAGEAETAALLMGLRVRGERAFEVAGFAKALRETCLRIPVNDPYVIDTAGTGGDGLRTMNVSTISALLAAYLGVKVLKHGNRSVSSSSGSADFLEALGFNISVKPETALLMLNNHRFSFAFAPMYHPAMKNVMPVRRRLGIRTIFNLVGPLANPGLVRRQVLGVAEAGIMGVMAEAAGLIGYDHLLLVHGEPGIDEVSVFGRTMIYEVKGNSIDKYVIEPPELGLRIHELRDVVVSNPMESIEKAKRGLMGVDEAALDFIAANTAMALYVAGKVKDPRDGVEAVKQIAGNSNDFWSYVNNVAAVSRRDSA.

5-phospho-alpha-D-ribose 1-diphosphate contacts are provided by residues Gly-79, 82–83 (GD), Thr-87, 89–92 (NVST), 107–115 (KHGNRSVSS), and Ser-119. Gly-79 provides a ligand contact to anthranilate. Mg(2+) is bound at residue Ser-91. An anthranilate-binding site is contributed by Asn-110. Arg-165 is an anthranilate binding site. Mg(2+) contacts are provided by Asp-224 and Glu-225.

Belongs to the anthranilate phosphoribosyltransferase family. As to quaternary structure, homodimer. Mg(2+) serves as cofactor.

The catalysed reaction is N-(5-phospho-beta-D-ribosyl)anthranilate + diphosphate = 5-phospho-alpha-D-ribose 1-diphosphate + anthranilate. Its pathway is amino-acid biosynthesis; L-tryptophan biosynthesis; L-tryptophan from chorismate: step 2/5. Functionally, catalyzes the transfer of the phosphoribosyl group of 5-phosphorylribose-1-pyrophosphate (PRPP) to anthranilate to yield N-(5'-phosphoribosyl)-anthranilate (PRA). The protein is Anthranilate phosphoribosyltransferase of Caldivirga maquilingensis (strain ATCC 700844 / DSM 13496 / JCM 10307 / IC-167).